The following is a 722-amino-acid chain: ORC ubiquitin ligase 1 (722 aa).

The RING-type; degenerate zinc-finger motif lies at 18–56 (CHICLGKVRQPVVCTNNHVFCSICIDLWLKNNSQCPACR). Coiled coils occupy residues 87–129 (LRKT…TILD) and 157–267 (VVEW…KEDV). The residue at position 210 (serine 210) is a Phosphoserine. The interval 273 to 359 (RAPSADSKGP…RLGARETPMD (87 aa)) is disordered. A compositionally biased stretch (low complexity) spans 302–319 (AGSASASHLASPSSSRLA). Over residues 323-338 (SVRQESTSRTEPNCPQ) the composition is skewed to polar residues. Residues 339 to 359 (NKDRYPKPTEPRLGARETPMD) show a composition bias toward basic and acidic residues. A phosphoserine mark is found at serine 522, serine 549, serine 557, serine 564, and serine 566. The segment covering 541-555 (MSESDNSKSPCNNGF) has biased composition (polar residues). Disordered regions lie at residues 541–585 (MSES…GSKL) and 691–722 (VPEK…ATKS). Positions 571 to 581 (EFLEEPDKLQE) are enriched in basic and acidic residues. Positions 698–722 (NGNQSTKRKIQSSLANASPSKATKS) are enriched in polar residues. 2 positions are modified to phosphoserine: serine 715 and serine 717.

As to quaternary structure, associates with ORC complex. Binds to chromatin; association is cell cycle-regulated, absent from mitotic chromosomes, is associated with chromatin from G1 and partially released from chromatin from mid S-phase. Post-translationally, auto-ubiquitinated.

It localises to the chromosome. It catalyses the reaction S-ubiquitinyl-[E2 ubiquitin-conjugating enzyme]-L-cysteine + [acceptor protein]-L-lysine = [E2 ubiquitin-conjugating enzyme]-L-cysteine + N(6)-ubiquitinyl-[acceptor protein]-L-lysine.. E3 ubiquitin ligase essential for DNA replication origin activation during S phase. Acts as a replication origin selector which selects the origins to be fired and catalyzes the multi-mono-ubiquitination of a subset of chromatin-bound ORC3 and ORC5 during S-phase. This is ORC ubiquitin ligase 1 from Mus musculus (Mouse).